A 265-amino-acid polypeptide reads, in one-letter code: 4-hydroxy-tetrahydrodipicolinate reductase (265 aa).

Residues 7 to 12 and D33 each bind NAD(+); that span reads GASGRM. Position 34 (R34) interacts with NADP(+). Residues 96–98 and 120–123 contribute to the NAD(+) site; these read GTT and ASNF. The Proton donor/acceptor role is filled by H153. A (S)-2,3,4,5-tetrahydrodipicolinate-binding site is contributed by H154. K157 acts as the Proton donor in catalysis. Position 163 to 164 (163 to 164) interacts with (S)-2,3,4,5-tetrahydrodipicolinate; the sequence is GT.

It belongs to the DapB family.

The protein resides in the cytoplasm. It catalyses the reaction (S)-2,3,4,5-tetrahydrodipicolinate + NAD(+) + H2O = (2S,4S)-4-hydroxy-2,3,4,5-tetrahydrodipicolinate + NADH + H(+). It carries out the reaction (S)-2,3,4,5-tetrahydrodipicolinate + NADP(+) + H2O = (2S,4S)-4-hydroxy-2,3,4,5-tetrahydrodipicolinate + NADPH + H(+). It functions in the pathway amino-acid biosynthesis; L-lysine biosynthesis via DAP pathway; (S)-tetrahydrodipicolinate from L-aspartate: step 4/4. Catalyzes the conversion of 4-hydroxy-tetrahydrodipicolinate (HTPA) to tetrahydrodipicolinate. In Paraburkholderia phymatum (strain DSM 17167 / CIP 108236 / LMG 21445 / STM815) (Burkholderia phymatum), this protein is 4-hydroxy-tetrahydrodipicolinate reductase.